Here is a 306-residue protein sequence, read N- to C-terminus: Palmitoyl-protein thioesterase ABHD10, mitochondrial (306 aa).

Residues 1–52 constitute a mitochondrion transit peptide; that stretch reads MAVARLAAVAAWVPCRSWGWAAVPFGPHRGLSVLLARIPQRAPRWLPACRQK. The 101-residue stretch at 78 to 178 folds into the AB hydrolase-1 domain; that stretch reads IIFIPGYLSY…VVALIGVATA (101 aa). Residues Ser-152, Asp-249, and His-279 each act as charge relay system in the active site.

The protein belongs to the AB hydrolase superfamily.

It is found in the mitochondrion. The catalysed reaction is S-hexadecanoyl-L-cysteinyl-[protein] + H2O = L-cysteinyl-[protein] + hexadecanoate + H(+). It catalyses the reaction mycophenolic acid O-acyl-beta-D-glucuronide + H2O = mycophenolate + D-glucuronate + H(+). With respect to regulation, inhibited by palmostatin-B. Acts as an acyl-protein thioesterase that hydrolyzes fatty acids from acylated residues in proteins. Regulates the mitochondrial S-depalmitoylation of the nucleophilic active site residue of peroxiredoxin-5/PRDX5, a key antioxidant protein, therefore modulating mitochondrial antioxidant ability. Also catalyzes the deglucuronidation of mycophenolic acid acyl-glucuronide, an active metabolite of the immunosuppressant drug mycophenolate. The protein is Palmitoyl-protein thioesterase ABHD10, mitochondrial of Homo sapiens (Human).